The following is a 289-amino-acid chain: Sphingomyelinase D (289 aa).

The signal sequence occupies residues 1–22 (MQSISVLICVLLALSILNFTVA). The active site involves His-34. Glu-54, Asp-56, and Asp-103 together coordinate Mg(2+). The SMD-tail motif lies at 282 to 289 (ATEDDAPW).

The protein belongs to the sphingomyelinase D/phospholipase D family. Mg(2+) is required as a cofactor.

Its subcellular location is the secreted. It catalyses the reaction a sphingomyelin + H2O = an N-acylsphing-4-enine 1-phosphate + choline + H(+). Its activity is regulated as follows. Sphingomyelinase activity is reduced by 33 percent following addition of EDTA. Its function is as follows. Catalyzes the hydrolysis of sphingomyelin. Sphingomyelinases D are produced by some spider in their venoms, but also by arthropods such as ticks, or pathogenic bacteria and fungi. They might play a role in pathogenicity through different mechanisms, such as membrane destabilization and host cell penetration, but also pulmonary inflammation and cutaneous lesions. This is Sphingomyelinase D from Aspergillus flavus (strain ATCC 200026 / FGSC A1120 / IAM 13836 / NRRL 3357 / JCM 12722 / SRRC 167).